The primary structure comprises 192 residues: LexA repressor (192 aa).

The H-T-H motif DNA-binding region spans 15–35 (RAEIARELGFRSANAAEEHLK). Catalysis depends on for autocatalytic cleavage activity residues serine 109 and lysine 146.

Belongs to the peptidase S24 family. As to quaternary structure, homodimer.

The catalysed reaction is Hydrolysis of Ala-|-Gly bond in repressor LexA.. Represses a number of genes involved in the response to DNA damage (SOS response), including recA and lexA. In the presence of single-stranded DNA, RecA interacts with LexA causing an autocatalytic cleavage which disrupts the DNA-binding part of LexA, leading to derepression of the SOS regulon and eventually DNA repair. The sequence is that of LexA repressor from Photobacterium profundum (strain SS9).